The primary structure comprises 240 residues: Regulatory protein RecX (240 aa).

The protein belongs to the RecX family.

The protein resides in the cytoplasm. Modulates RecA activity. This chain is Regulatory protein RecX, found in Lacticaseibacillus paracasei (strain ATCC 334 / BCRC 17002 / CCUG 31169 / CIP 107868 / KCTC 3260 / NRRL B-441) (Lactobacillus paracasei).